A 490-amino-acid polypeptide reads, in one-letter code: Protein nucleotidyltransferase YdiU (490 aa).

ATP is bound by residues glycine 94, glycine 96, arginine 97, lysine 117, aspartate 129, glycine 130, arginine 180, and arginine 187. The active-site Proton acceptor is the aspartate 256. Mg(2+) contacts are provided by asparagine 257 and aspartate 266. Aspartate 266 is an ATP binding site.

The protein belongs to the SELO family. Mg(2+) serves as cofactor. Mn(2+) is required as a cofactor.

The enzyme catalyses L-seryl-[protein] + ATP = 3-O-(5'-adenylyl)-L-seryl-[protein] + diphosphate. It carries out the reaction L-threonyl-[protein] + ATP = 3-O-(5'-adenylyl)-L-threonyl-[protein] + diphosphate. It catalyses the reaction L-tyrosyl-[protein] + ATP = O-(5'-adenylyl)-L-tyrosyl-[protein] + diphosphate. The catalysed reaction is L-histidyl-[protein] + UTP = N(tele)-(5'-uridylyl)-L-histidyl-[protein] + diphosphate. The enzyme catalyses L-seryl-[protein] + UTP = O-(5'-uridylyl)-L-seryl-[protein] + diphosphate. It carries out the reaction L-tyrosyl-[protein] + UTP = O-(5'-uridylyl)-L-tyrosyl-[protein] + diphosphate. Nucleotidyltransferase involved in the post-translational modification of proteins. It can catalyze the addition of adenosine monophosphate (AMP) or uridine monophosphate (UMP) to a protein, resulting in modifications known as AMPylation and UMPylation. This is Protein nucleotidyltransferase YdiU from Clostridium perfringens (strain SM101 / Type A).